We begin with the raw amino-acid sequence, 515 residues long: Serine--tRNA ligase, cytoplasmic (515 aa).

Positions 9-61 (RTDKGGDPEIIRETQRKRFKDVSLVDKLVQADTEWRKCRFTADNLNKAKNLCS) are interaction with tRNA. L-serine contacts are provided by T271 and R302. Residues 302 to 304 (RQE) and 318 to 321 (VHQF) each bind ATP. E325 lines the L-serine pocket. Residue 391–394 (ELVS) coordinates ATP. N427 contributes to the L-serine binding site. The interval 475–515 (PIDQETTKKQKKQQEGGKKKKHQGGDADLENKVENMSVNDS) is disordered. Positions 479–507 (ETTKKQKKQQEGGKKKKHQGGDADLENKV) are enriched in basic and acidic residues. Positions 482–494 (KKQKKQQEGGKKK) match the Nuclear localization signal motif.

The protein belongs to the class-II aminoacyl-tRNA synthetase family. Type-1 seryl-tRNA synthetase subfamily.

It is found in the cytoplasm. Its subcellular location is the nucleus. It carries out the reaction tRNA(Ser) + L-serine + ATP = L-seryl-tRNA(Ser) + AMP + diphosphate + H(+). It catalyses the reaction tRNA(Sec) + L-serine + ATP = L-seryl-tRNA(Sec) + AMP + diphosphate + H(+). Catalyzes the attachment of serine to tRNA(Ser) in a two-step reaction: serine is first activated by ATP to form Ser-AMP and then transferred to the acceptor end of tRNA(Ser). Is probably also able to aminoacylate tRNA(Sec) with serine, to form the misacylated tRNA L-seryl-tRNA(Sec), which will be further converted into selenocysteinyl-tRNA(Sec). In the nucleus, binds to the vegfa core promoter and prevents myc binding and transcriptional activation by myc. Thereby inhibits the production of vegfa and sprouting angiogenesis mediated by vegfa. This chain is Serine--tRNA ligase, cytoplasmic (sars1), found in Danio rerio (Zebrafish).